A 311-amino-acid chain; its full sequence is Mediator of RNA polymerase II transcription subunit 27 (311 aa).

At Ser132 the chain carries Phosphoserine. Lys134 bears the N6-methyllysine mark.

It belongs to the Mediator complex subunit 27 family. Component of the Mediator complex, which is composed of MED1, MED4, MED6, MED7, MED8, MED9, MED10, MED11, MED12, MED13, MED13L, MED14, MED15, MED16, MED17, MED18, MED19, MED20, MED21, MED22, MED23, MED24, MED25, MED26, MED27, MED29, MED30, MED31, CCNC, CDK8 and CDC2L6/CDK11. The MED12, MED13, CCNC and CDK8 subunits form a distinct module termed the CDK8 module. Mediator containing the CDK8 module is less active than Mediator lacking this module in supporting transcriptional activation. Individual preparations of the Mediator complex lacking one or more distinct subunits have been variously termed ARC, CRSP, DRIP, PC2, SMCC and TRAP.

The protein localises to the nucleus. In terms of biological role, component of the Mediator complex, a coactivator involved in the regulated transcription of nearly all RNA polymerase II-dependent genes. Mediator functions as a bridge to convey information from gene-specific regulatory proteins to the basal RNA polymerase II transcription machinery. Mediator is recruited to promoters by direct interactions with regulatory proteins and serves as a scaffold for the assembly of a functional preinitiation complex with RNA polymerase II and the general transcription factors. This Bos taurus (Bovine) protein is Mediator of RNA polymerase II transcription subunit 27 (MED27).